Here is an 843-residue protein sequence, read N- to C-terminus: Protein P (843 aa).

The interval 1–177 (MPLSYQHFRK…FCGSPYSWEQ (177 aa)) is terminal protein domain (TP). The segment at 178 to 346 (ELQHGRLVFQ…YCLSHLINLH (169 aa)) is spacer. Disordered stretches follow at residues 218–243 (LKQSRLGLQPQQGSLARGKSGRSGSI) and 291–315 (TAQRHSPSGHAVEFHSIPPSSAGSQ). The interval 347–690 (EDWGPCIEHG…YLNLYPVARQ (344 aa)) is polymerase/reverse transcriptase domain (RT). The region spanning 357 to 600 (EHNIRIPRTP…YSLNFMGYVI (244 aa)) is the Reverse transcriptase domain. Mg(2+) is bound by residues Asp-429, Asp-551, and Asp-552.

The protein belongs to the hepadnaviridae P protein family.

It catalyses the reaction DNA(n) + a 2'-deoxyribonucleoside 5'-triphosphate = DNA(n+1) + diphosphate. It carries out the reaction Endonucleolytic cleavage to 5'-phosphomonoester.. Its activity is regulated as follows. Activated by host HSP70 and HSP40 in vitro to be able to bind the epsilon loop of the pgRNA. Because deletion of the RNase H region renders the protein partly chaperone-independent, the chaperones may be needed indirectly to relieve occlusion of the RNA-binding site by this domain. Inhibited by several reverse-transcriptase inhibitors: Lamivudine, Adefovir and Entecavir. Functionally, multifunctional enzyme that converts the viral RNA genome into dsDNA in viral cytoplasmic capsids. This enzyme displays a DNA polymerase activity that can copy either DNA or RNA templates, and a ribonuclease H (RNase H) activity that cleaves the RNA strand of RNA-DNA heteroduplexes in a partially processive 3'- to 5'-endonucleasic mode. Neo-synthesized pregenomic RNA (pgRNA) are encapsidated together with the P protein, and reverse-transcribed inside the nucleocapsid. Initiation of reverse-transcription occurs first by binding the epsilon loop on the pgRNA genome, and is initiated by protein priming, thereby the 5'-end of (-)DNA is covalently linked to P protein. Partial (+)DNA is synthesized from the (-)DNA template and generates the relaxed circular DNA (RC-DNA) genome. After budding and infection, the RC-DNA migrates in the nucleus, and is converted into a plasmid-like covalently closed circular DNA (cccDNA). The activity of P protein does not seem to be necessary for cccDNA generation, and is presumably released from (+)DNA by host nuclear DNA repair machinery. This Hepatitis B virus genotype C subtype ayw (isolate Australia/AustRC/1992) (HBV-C) protein is Protein P.